Consider the following 401-residue polypeptide: Chorismate synthase (401 aa).

NADP(+) is bound by residues arginine 40 and arginine 46. FMN contacts are provided by residues 135-137, 256-257, glycine 300, 315-319, and arginine 341; these read RAS, QA, and KPIST.

It belongs to the chorismate synthase family. Homotetramer. FMNH2 is required as a cofactor.

It carries out the reaction 5-O-(1-carboxyvinyl)-3-phosphoshikimate = chorismate + phosphate. It participates in metabolic intermediate biosynthesis; chorismate biosynthesis; chorismate from D-erythrose 4-phosphate and phosphoenolpyruvate: step 7/7. In terms of biological role, catalyzes the anti-1,4-elimination of the C-3 phosphate and the C-6 proR hydrogen from 5-enolpyruvylshikimate-3-phosphate (EPSP) to yield chorismate, which is the branch point compound that serves as the starting substrate for the three terminal pathways of aromatic amino acid biosynthesis. This reaction introduces a second double bond into the aromatic ring system. In Mycobacterium avium (strain 104), this protein is Chorismate synthase.